A 359-amino-acid chain; its full sequence is Alanine racemase, biosynthetic (359 aa).

K34 acts as the Proton acceptor; specific for D-alanine in catalysis. K34 carries the N6-(pyridoxal phosphate)lysine modification. Substrate is bound at residue R129. Y255 acts as the Proton acceptor; specific for L-alanine in catalysis. M303 lines the substrate pocket.

Belongs to the alanine racemase family. Pyridoxal 5'-phosphate serves as cofactor.

The catalysed reaction is L-alanine = D-alanine. Its pathway is amino-acid biosynthesis; D-alanine biosynthesis; D-alanine from L-alanine: step 1/1. It functions in the pathway cell wall biogenesis; peptidoglycan biosynthesis. Catalyzes the interconversion of L-alanine and D-alanine. Provides the D-alanine required for cell wall biosynthesis. The chain is Alanine racemase, biosynthetic (alr) from Salmonella typhi.